Here is a 586-residue protein sequence, read N- to C-terminus: Mitogen-activated protein kinase 15 (586 aa).

The 292-residue stretch at 14 to 305 (YDIKKRLGKG…AEEALEHPYV (292 aa)) folds into the Protein kinase domain. Residues 20-28 (LGKGAYGIV) and Lys43 each bind ATP. Residue Asp138 is the Proton acceptor of the active site. Disordered regions lie at residues 354–506 (QKRE…DAPP) and 520–539 (NQRT…RFGR). Pro residues predominate over residues 382 to 393 (PAPPAGTNPAPQ). Over residues 400–414 (PQRAAIAAPNQPPAQ) the composition is skewed to low complexity. Residues 415-439 (KDSTQQSPKIKAPSSNPITHSTTHG) are compositionally biased toward polar residues. Over residues 452 to 463 (AGQQGAAGTTAQ) the composition is skewed to low complexity. The span at 464–473 (EVRKEVESRS) shows a compositional bias: basic and acidic residues. Over residues 484–498 (FSHSQQARAAATNSA) the composition is skewed to polar residues.

Interacts with dvl2.

The protein resides in the cytoplasm. It is found in the cytoskeleton. The protein localises to the cilium basal body. Its subcellular location is the cell projection. It localises to the cilium. The protein resides in the cell junction. It catalyses the reaction L-seryl-[protein] + ATP = O-phospho-L-seryl-[protein] + ADP + H(+). The enzyme catalyses L-threonyl-[protein] + ATP = O-phospho-L-threonyl-[protein] + ADP + H(+). Atypical MAPK protein that regulates ciliogenesis by phosphorylating rcsd1 through its binding with dvl2. This is Mitogen-activated protein kinase 15 from Xenopus laevis (African clawed frog).